The chain runs to 627 residues: Altered inheritance of mitochondria protein 9, mitochondrial (627 aa).

The N-terminal 43 residues, 1–43 (MIRYTVAGHSRRCVVGASKRVGAIKCITVAATKRFISNKPNEV), are a transit peptide targeting the mitochondrion.

This sequence belongs to the AIM9 family.

Its subcellular location is the mitochondrion. This Saccharomyces cerevisiae (strain RM11-1a) (Baker's yeast) protein is Altered inheritance of mitochondria protein 9, mitochondrial (AIM9).